The chain runs to 65 residues: MPKMKTHRGAAKRFKVLKSGKVKRSRAYKSHLLTHKNAKRKRRLRKATYLVGADAKNIKRLLPYS.

This sequence belongs to the bacterial ribosomal protein bL35 family.

This Thermoanaerobacter pseudethanolicus (strain ATCC 33223 / 39E) (Clostridium thermohydrosulfuricum) protein is Large ribosomal subunit protein bL35.